A 364-amino-acid polypeptide reads, in one-letter code: Trans-enoyl reductase traG (364 aa).

51–54 (VDAK) lines the NADP(+) pocket. 136–143 (LGLFTAGL) serves as a coordination point for substrate. NADP(+)-binding positions include 176 to 179 (STAT), 199 to 202 (SKAN), Tyr-217, and 264 to 265 (LE). 286–290 (ALTVF) provides a ligand contact to substrate. NADP(+) is bound at residue 355–356 (MS).

The protein belongs to the zinc-containing alcohol dehydrogenase family. In terms of assembly, monomer.

It participates in secondary metabolite biosynthesis. Functionally, trans-enoyl reductase; part of the tra gene cluster that produces terrestric acid. The clavatol biosynthesis cluster cla and the terrestric acid cluster tra are both involved in the production of peniphenones and penilactones. The non-reducing PKS claF is responsible for the formation of clavatol from successive condensations of 3 malonyl-CoA units, presumably with a simple acetyl-CoA starter unit, and 2 methylation steps. The esterase claE probably collaborates with claF by catalyzing the hydrolysis of ACP-bound acyl intermediates to free the ACP from stalled intermediates. The clavatol oxidase claD then converts clavatol to hydroxyclavatol. Spontaneous dehydration of hydroxyclavatol leads to the accumulation of the highly active ortho-quinone methide. On the other hand, the PKS-NRPS hybrid traA is involved in the formation of crustosic acid, with the help of traB and traD. The polyketide synthase module (PKS) of traA is responsible for the synthesis of the polyketide backbone via the condensation of an acetyl-CoA starter unit with 3 malonyl-CoA units. The downstream nonribosomal peptide synthetase (NRPS) module then amidates the carboxyl end of the polyketide with L-malic acid. Because traA lacks a designated enoylreductase (ER) domain, the required activity is provided the enoyl reductase traG. Crustosic acid undergoes decarboxylation and isomerization to the terrestric acid, catalyzed by the 2-oxoglutarate-dependent dioxygenase traH. Both acids are further converted to the 2 gamma-butyrolactones (R)-5-methyltetronic acid and (S)-5-carboxylmethyltetronic acid, with involvement of the cytochrome P450 monooxygenase claJ. Spontaneous addition of the methide to these gamma-butyrolactones leads to peniphenone D and penilactone D, which undergo again stereospecific attacking by methide to give penilactones A and B. The sequence is that of Trans-enoyl reductase traG from Penicillium crustosum (Blue mold fungus).